Consider the following 746-residue polypeptide: WD repeat-containing and planar cell polarity effector protein fritz homolog (746 aa).

2 WD repeats span residues 326–374 and 375–414; these read IQCV…TLLA and QTEL…INIQ.

It belongs to the WD repeat fritz family. As to quaternary structure, component of the CPLANE (ciliogenesis and planar polarity effectors) complex, composed of INTU, FUZ and WDPCP. Interacts with CPLANE1.

It is found in the cell membrane. It localises to the cytoplasm. The protein resides in the cytoskeleton. Its subcellular location is the cilium axoneme. The protein localises to the cilium basal body. Its function is as follows. Probable effector of the planar cell polarity signaling pathway which regulates the septin cytoskeleton in both ciliogenesis and collective cell movements. Together with FUZ and WDPCP proposed to function as core component of the CPLANE (ciliogenesis and planar polarity effectors) complex involved in the recruitment of peripheral IFT-A proteins to basal bodies. Binds phosphatidylinositol 3-phosphate with highest affinity, followed by phosphatidylinositol 4-phosphate and phosphatidylinositol 5-phosphate. This Homo sapiens (Human) protein is WD repeat-containing and planar cell polarity effector protein fritz homolog (WDPCP).